Reading from the N-terminus, the 230-residue chain is uncharacterized protein (230 aa).

Residues 1 to 11 (MPVPSVTVTTD) are compositionally biased toward polar residues. The tract at residues 1-88 (MPVPSVTVTT…TLKRPTSNSI (88 aa)) is disordered. Residues 63-73 (DDQHRHSDVHS) are compositionally biased toward basic and acidic residues. Residues 79-88 (TLKRPTSNSI) are compositionally biased toward polar residues. Ser106 carries the post-translational modification Phosphoserine. Residues 156 to 179 (LKREDSRVSSTKKEHINDHTDMHS) show a composition bias toward basic and acidic residues. Positions 156–203 (LKREDSRVSSTKKEHINDHTDMHSTRSKVTTNSQGSSLEPNKLNMAVE) are disordered. Positions 182-194 (SKVTTNSQGSSLE) are enriched in polar residues.

This is an uncharacterized protein from Saccharomyces cerevisiae (strain ATCC 204508 / S288c) (Baker's yeast).